The sequence spans 574 residues: Pyruvate kinase PKLR (574 aa).

Phosphoserine is present on residues Ser-2, Ser-19, Ser-26, and Ser-43. Arg-116 contacts substrate. K(+) is bound by residues Asn-118, Ser-120, Asp-156, and Thr-157. 118–121 (NFSH) contacts ATP. ATP-binding residues include Arg-163 and Lys-250. At Ser-292 the chain carries Phosphoserine. Lys-313 is a substrate binding site. Glu-315 is a binding site for Mn(2+). Positions 338, 339, and 371 each coordinate substrate. A Mn(2+)-binding site is contributed by Asp-339. Beta-D-fructose 1,6-bisphosphate contacts are provided by residues 475 to 480 (TTTGRS), Trp-525, Arg-532, and 559 to 564 (RPGSGY).

This sequence belongs to the pyruvate kinase family. Homotetramer. Mg(2+) is required as a cofactor. Mn(2+) serves as cofactor. It depends on K(+) as a cofactor.

It catalyses the reaction pyruvate + ATP = phosphoenolpyruvate + ADP + H(+). It functions in the pathway carbohydrate degradation; glycolysis; pyruvate from D-glyceraldehyde 3-phosphate: step 5/5. With respect to regulation, allosterically activated by fructose 1,6-bisphosphate. Pyruvate kinase that catalyzes the conversion of phosphoenolpyruvate to pyruvate with the synthesis of ATP, and which plays a key role in glycolysis. This Homo sapiens (Human) protein is Pyruvate kinase PKLR (PKLR).